The chain runs to 251 residues: Flap endonuclease Xni (251 aa).

Asp104 provides a ligand contact to Mg(2+). The 91-residue stretch at 160–250 folds into the 5'-3' exonuclease domain; it reads VLPRQLPDYW…SGNLQQLRLK (91 aa). 5 residues coordinate K(+): Leu171, Ala172, Pro180, Val182, and Val185. The tract at residues 184–189 is interaction with DNA; sequence GVGAKT.

Belongs to the Xni family. Mg(2+) is required as a cofactor. The cofactor is K(+).

In terms of biological role, has flap endonuclease activity. During DNA replication, flap endonucleases cleave the 5'-overhanging flap structure that is generated by displacement synthesis when DNA polymerase encounters the 5'-end of a downstream Okazaki fragment. The polypeptide is Flap endonuclease Xni (Yersinia pseudotuberculosis serotype I (strain IP32953)).